Consider the following 308-residue polypeptide: Coenzyme PQQ synthesis protein B (308 aa).

This sequence belongs to the PqqB family.

The protein operates within cofactor biosynthesis; pyrroloquinoline quinone biosynthesis. May be involved in the transport of PQQ or its precursor to the periplasm. In Klebsiella pneumoniae subsp. pneumoniae (strain ATCC 700721 / MGH 78578), this protein is Coenzyme PQQ synthesis protein B.